Consider the following 87-residue polypeptide: Small ribosomal subunit protein bS20 (87 aa).

Positions 1 to 22 (MANSPQAKKRARQNEKRFAINK) are disordered.

This sequence belongs to the bacterial ribosomal protein bS20 family.

Binds directly to 16S ribosomal RNA. In Ruegeria sp. (strain TM1040) (Silicibacter sp.), this protein is Small ribosomal subunit protein bS20.